Consider the following 350-residue polypeptide: Dihydroorotate dehydrogenase (quinone) (350 aa).

FMN is bound by residues 59–63 (AGLDK) and T83. K63 contributes to the substrate binding site. Position 108 to 112 (108 to 112 (NRMGF)) interacts with substrate. 2 residues coordinate FMN: N136 and N169. N169 lines the substrate pocket. The active-site Nucleophile is S172. A substrate-binding site is contributed by N174. FMN is bound by residues K214 and T242. Position 243-244 (243-244 (NT)) interacts with substrate. Residues G265, G294, and 315 to 316 (YS) each bind FMN.

It belongs to the dihydroorotate dehydrogenase family. Type 2 subfamily. In terms of assembly, monomer. Requires FMN as cofactor.

It is found in the cell membrane. The catalysed reaction is (S)-dihydroorotate + a quinone = orotate + a quinol. The protein operates within pyrimidine metabolism; UMP biosynthesis via de novo pathway; orotate from (S)-dihydroorotate (quinone route): step 1/1. Its function is as follows. Catalyzes the conversion of dihydroorotate to orotate with quinone as electron acceptor. This is Dihydroorotate dehydrogenase (quinone) from Aromatoleum aromaticum (strain DSM 19018 / LMG 30748 / EbN1) (Azoarcus sp. (strain EbN1)).